We begin with the raw amino-acid sequence, 178 residues long: Disulfide bond formation protein B (178 aa).

The Cytoplasmic portion of the chain corresponds to 1–14 (MLSFFKTLSMGRSG). The helical transmembrane segment at 15–31 (WLLLAFSALVLELVALY) threads the bilayer. Over 32–49 (FQYGMQLQPCVMCVYERV) the chain is Periplasmic. Cys-41 and Cys-44 form a disulfide bridge. A helical membrane pass occupies residues 50 to 65 (ALGGILFAGIIGAIAP). The Cytoplasmic segment spans residues 66–72 (SSWFFRF). The chain crosses the membrane as a helical span at residues 73 to 90 (LGIIIGLGASVKGFLLAL). Topologically, residues 91–145 (KHVDYQLNPAPWNQCAYLPEFPQTLPLDQWFPYLFKPIGSCSDIQWSFLGFSMAQ) are periplasmic. A disulfide bridge links Cys-105 with Cys-131. Residues 146–164 (WILVMFAFYSILLAIILIS) form a helical membrane-spanning segment. Over 165-178 (QVKAGKPKHREIFR) the chain is Cytoplasmic.

Belongs to the DsbB family.

The protein resides in the cell inner membrane. Required for disulfide bond formation in some periplasmic proteins. Acts by oxidizing the DsbA protein. The chain is Disulfide bond formation protein B from Mannheimia succiniciproducens (strain KCTC 0769BP / MBEL55E).